The sequence spans 209 residues: LexA repressor (209 aa).

Residues 32-52 (VREIGKAVDLSSTSTVHGHLA) constitute a DNA-binding region (H-T-H motif). Residues Ser131 and Lys169 each act as for autocatalytic cleavage activity in the active site.

It belongs to the peptidase S24 family. As to quaternary structure, homodimer.

It carries out the reaction Hydrolysis of Ala-|-Gly bond in repressor LexA.. In terms of biological role, represses a number of genes involved in the response to DNA damage (SOS response), including recA and lexA. In the presence of single-stranded DNA, RecA interacts with LexA causing an autocatalytic cleavage which disrupts the DNA-binding part of LexA, leading to derepression of the SOS regulon and eventually DNA repair. The protein is LexA repressor of Enterococcus faecalis (strain ATCC 700802 / V583).